The primary structure comprises 419 residues: 3-isopropylmalate dehydratase large subunit (419 aa).

Cys-300, Cys-360, and Cys-363 together coordinate [4Fe-4S] cluster.

This sequence belongs to the aconitase/IPM isomerase family. LeuC type 2 subfamily. Heterodimer of LeuC and LeuD. It depends on [4Fe-4S] cluster as a cofactor.

The catalysed reaction is (2R,3S)-3-isopropylmalate = (2S)-2-isopropylmalate. Its pathway is amino-acid biosynthesis; L-leucine biosynthesis; L-leucine from 3-methyl-2-oxobutanoate: step 2/4. In terms of biological role, catalyzes the isomerization between 2-isopropylmalate and 3-isopropylmalate, via the formation of 2-isopropylmaleate. The polypeptide is 3-isopropylmalate dehydratase large subunit (Acetivibrio thermocellus (strain ATCC 27405 / DSM 1237 / JCM 9322 / NBRC 103400 / NCIMB 10682 / NRRL B-4536 / VPI 7372) (Clostridium thermocellum)).